Here is a 174-residue protein sequence, read N- to C-terminus: ATP synthase subunit b 2 (174 aa).

The chain crosses the membrane as a helical span at residues 27 to 47 (IFWLIITLVAIYLILTKVALP).

This sequence belongs to the ATPase B chain family. As to quaternary structure, F-type ATPases have 2 components, F(1) - the catalytic core - and F(0) - the membrane proton channel. F(1) has five subunits: alpha(3), beta(3), gamma(1), delta(1), epsilon(1). F(0) has three main subunits: a(1), b(2) and c(10-14). The alpha and beta chains form an alternating ring which encloses part of the gamma chain. F(1) is attached to F(0) by a central stalk formed by the gamma and epsilon chains, while a peripheral stalk is formed by the delta and b chains.

The protein resides in the cell inner membrane. Functionally, f(1)F(0) ATP synthase produces ATP from ADP in the presence of a proton or sodium gradient. F-type ATPases consist of two structural domains, F(1) containing the extramembraneous catalytic core and F(0) containing the membrane proton channel, linked together by a central stalk and a peripheral stalk. During catalysis, ATP synthesis in the catalytic domain of F(1) is coupled via a rotary mechanism of the central stalk subunits to proton translocation. In terms of biological role, component of the F(0) channel, it forms part of the peripheral stalk, linking F(1) to F(0). The b'-subunit is a diverged and duplicated form of b found in plants and photosynthetic bacteria. This is ATP synthase subunit b 2 (atpF2) from Dinoroseobacter shibae (strain DSM 16493 / NCIMB 14021 / DFL 12).